Reading from the N-terminus, the 131-residue chain is Torsin-1A-interacting protein 2, isoform IFRG15 (131 aa).

In Homo sapiens (Human), this protein is Torsin-1A-interacting protein 2, isoform IFRG15 (TOR1AIP2).